Consider the following 97-residue polypeptide: Putative pterin-4-alpha-carbinolamine dehydratase (97 aa).

It belongs to the pterin-4-alpha-carbinolamine dehydratase family.

The catalysed reaction is (4aS,6R)-4a-hydroxy-L-erythro-5,6,7,8-tetrahydrobiopterin = (6R)-L-erythro-6,7-dihydrobiopterin + H2O. This Rhizorhabdus wittichii (strain DSM 6014 / CCUG 31198 / JCM 15750 / NBRC 105917 / EY 4224 / RW1) (Sphingomonas wittichii) protein is Putative pterin-4-alpha-carbinolamine dehydratase.